A 618-amino-acid polypeptide reads, in one-letter code: Dihydroxy-acid dehydratase (618 aa).

Aspartate 81 provides a ligand contact to Mg(2+). Cysteine 122 provides a ligand contact to [2Fe-2S] cluster. Mg(2+) is bound by residues aspartate 123 and lysine 124. Lysine 124 bears the N6-carboxylysine mark. Residue cysteine 195 coordinates [2Fe-2S] cluster. Residue glutamate 491 participates in Mg(2+) binding. Serine 517 functions as the Proton acceptor in the catalytic mechanism.

The protein belongs to the IlvD/Edd family. In terms of assembly, homodimer. The cofactor is [2Fe-2S] cluster. Mg(2+) is required as a cofactor.

It carries out the reaction (2R)-2,3-dihydroxy-3-methylbutanoate = 3-methyl-2-oxobutanoate + H2O. The catalysed reaction is (2R,3R)-2,3-dihydroxy-3-methylpentanoate = (S)-3-methyl-2-oxopentanoate + H2O. It functions in the pathway amino-acid biosynthesis; L-isoleucine biosynthesis; L-isoleucine from 2-oxobutanoate: step 3/4. Its pathway is amino-acid biosynthesis; L-valine biosynthesis; L-valine from pyruvate: step 3/4. Functions in the biosynthesis of branched-chain amino acids. Catalyzes the dehydration of (2R,3R)-2,3-dihydroxy-3-methylpentanoate (2,3-dihydroxy-3-methylvalerate) into 2-oxo-3-methylpentanoate (2-oxo-3-methylvalerate) and of (2R)-2,3-dihydroxy-3-methylbutanoate (2,3-dihydroxyisovalerate) into 2-oxo-3-methylbutanoate (2-oxoisovalerate), the penultimate precursor to L-isoleucine and L-valine, respectively. This Rhodopseudomonas palustris (strain ATCC BAA-98 / CGA009) protein is Dihydroxy-acid dehydratase.